We begin with the raw amino-acid sequence, 121 residues long: Small ribosomal subunit protein uS13 (121 aa).

Residues 93-121 are disordered; the sequence is RGLPMRGQRTRTNARTRKGPRKGAAALKK.

The protein belongs to the universal ribosomal protein uS13 family. As to quaternary structure, part of the 30S ribosomal subunit. Forms a loose heterodimer with protein S19. Forms two bridges to the 50S subunit in the 70S ribosome.

Its function is as follows. Located at the top of the head of the 30S subunit, it contacts several helices of the 16S rRNA. In the 70S ribosome it contacts the 23S rRNA (bridge B1a) and protein L5 of the 50S subunit (bridge B1b), connecting the 2 subunits; these bridges are implicated in subunit movement. Contacts the tRNAs in the A and P-sites. The protein is Small ribosomal subunit protein uS13 of Paracidovorax citrulli (strain AAC00-1) (Acidovorax citrulli).